A 175-amino-acid chain; its full sequence is Cytochrome c homolog (175 aa).

Residues 1–8 (MSGKELNK) are Cytoplasmic-facing. The chain crosses the membrane as a helical; Signal-anchor span at residues 9-29 (IVAAILFASLIAMMVGFVANI). Residues 30–175 (LYKPTLELQH…LFLKTYVHDK (146 aa)) lie on the Periplasmic side of the membrane. Residues Cys84, Cys87, His88, and Met150 each coordinate heme c.

It belongs to the cytochrome c family. In terms of processing, binds 1 heme c group covalently per subunit.

Its subcellular location is the cell membrane. In terms of biological role, may be involved in electron transfer from bc1 complex to aa3. The sequence is that of Cytochrome c homolog (cycM) from Rickettsia felis (strain ATCC VR-1525 / URRWXCal2) (Rickettsia azadi).